Here is a 30-residue protein sequence, read N- to C-terminus: Circulin A (30 aa).

The cyclopeptide (Gly-Asn) cross-link spans 1–30 (GIPCGESCVWIPCISAALGCSCKNKVCYRN). 3 disulfides stabilise this stretch: Cys4–Cys20, Cys8–Cys22, and Cys13–Cys27.

This is a cyclic peptide. Expressed in fruit, pedicel, root and stem but not in leaf (at protein level).

In terms of biological role, probably participates in a plant defense mechanism. This is Circulin A from Chassalia chartacea (Chassalia curviflora).